The sequence spans 100 residues: uncharacterized protein (100 aa).

The interval 1 to 86 (MRGTRRGPSG…RHRPPEVTEP (86 aa)) is disordered. The segment covering 35 to 48 (DTPPPRAPPPPPPL) has biased composition (pro residues).

This is an uncharacterized protein from Human herpesvirus 6A (strain Uganda-1102) (HHV-6 variant A).